Reading from the N-terminus, the 339-residue chain is DNA-directed RNA polymerase RPB7 homolog (339 aa).

It belongs to the Asfivirus DNA-directed RNA polymerase RPB7 homolog family. In terms of assembly, part of the viral DNA-directed RNA polymerase that consists of 8 polII-like subunits (RPB1, RPB2, RPB3, RPB5, RPB6, RPB7, RPB9, RPB10), a capping enzyme and a termination factor.

It localises to the host cytoplasm. The protein resides in the virion. In terms of biological role, component of the DNA-directed RNA polymerase (RNAP) that catalyzes the transcription in the cytoplasm of viral DNA into RNA using the four ribonucleoside triphosphates as substrates. The chain is DNA-directed RNA polymerase RPB7 homolog from Ornithodoros (relapsing fever ticks).